We begin with the raw amino-acid sequence, 167 residues long: Ureidoglycolate lyase (167 aa).

Belongs to the ureidoglycolate lyase family. As to quaternary structure, homodimer. Ni(2+) serves as cofactor.

It catalyses the reaction (S)-ureidoglycolate = urea + glyoxylate. Its pathway is nitrogen metabolism; (S)-allantoin degradation. Functionally, catalyzes the catabolism of the allantoin degradation intermediate (S)-ureidoglycolate, generating urea and glyoxylate. Involved in the utilization of allantoin as nitrogen source. This is Ureidoglycolate lyase from Pseudomonas fluorescens (strain ATCC BAA-477 / NRRL B-23932 / Pf-5).